A 61-amino-acid chain; its full sequence is Inner membrane protein p12 (61 aa).

A helical transmembrane segment spans residues 16–36; it reads LLIVAIIVVIMAIMLYYFWWM.

It belongs to the asfivirus inner membrane protein p12 family. As to quaternary structure, homomultimer; disulfide-linked. In terms of processing, not glycosylated.

It localises to the virion membrane. The sequence is that of Inner membrane protein p12 from Ornithodoros (relapsing fever ticks).